Here is a 416-residue protein sequence, read N- to C-terminus: Gamma-glutamyl phosphate reductase (416 aa).

Belongs to the gamma-glutamyl phosphate reductase family.

It localises to the cytoplasm. The catalysed reaction is L-glutamate 5-semialdehyde + phosphate + NADP(+) = L-glutamyl 5-phosphate + NADPH + H(+). It participates in amino-acid biosynthesis; L-proline biosynthesis; L-glutamate 5-semialdehyde from L-glutamate: step 2/2. Its function is as follows. Catalyzes the NADPH-dependent reduction of L-glutamate 5-phosphate into L-glutamate 5-semialdehyde and phosphate. The product spontaneously undergoes cyclization to form 1-pyrroline-5-carboxylate. The protein is Gamma-glutamyl phosphate reductase of Streptococcus pyogenes serotype M1.